A 354-amino-acid polypeptide reads, in one-letter code: Selenide, water dikinase (354 aa).

Residue cysteine 23 is part of the active site. Residues lysine 26 and threonine 54–aspartate 56 contribute to the ATP site. Aspartate 57 is a binding site for Mg(2+). ATP contacts are provided by residues aspartate 74, aspartate 97, and glycine 145 to serine 147. Aspartate 97 is a Mg(2+) binding site. Aspartate 233 contributes to the Mg(2+) binding site.

This sequence belongs to the selenophosphate synthase 1 family. Class I subfamily. In terms of assembly, homodimer. Mg(2+) is required as a cofactor.

The catalysed reaction is hydrogenselenide + ATP + H2O = selenophosphate + AMP + phosphate + 2 H(+). Synthesizes selenophosphate from selenide and ATP. This is Selenide, water dikinase from Burkholderia orbicola (strain MC0-3).